Reading from the N-terminus, the 379-residue chain is L-lactate dehydrogenase (379 aa).

Positions Met1–Arg379 constitute an FMN hydroxy acid dehydrogenase domain. Residue Tyr24 coordinates substrate. FMN contacts are provided by Ser106 and Gln127. Tyr129 serves as a coordination point for substrate. Residue Thr155 coordinates FMN. Arg164 contacts substrate. Lys251 is an FMN binding site. Catalysis depends on His275, which acts as the Proton acceptor. Arg278 is a binding site for substrate. Position 306 to 330 (Asp306 to Arg330) interacts with FMN.

It belongs to the FMN-dependent alpha-hydroxy acid dehydrogenase family. As to quaternary structure, homotetramer. FMN serves as cofactor.

The protein localises to the cell inner membrane. The enzyme catalyses (S)-lactate + A = pyruvate + AH2. Functionally, catalyzes the conversion of L-lactate to pyruvate. Is coupled to the respiratory chain. In Ectopseudomonas mendocina (strain ymp) (Pseudomonas mendocina), this protein is L-lactate dehydrogenase.